The primary structure comprises 254 residues: N-acetylglucosaminyldiphosphoundecaprenol N-acetyl-beta-D-mannosaminyltransferase (254 aa).

Belongs to the glycosyltransferase 26 family. TagA/TarA subfamily.

The catalysed reaction is UDP-N-acetyl-alpha-D-mannosamine + N-acetyl-alpha-D-glucosaminyl-di-trans,octa-cis-undecaprenyl diphosphate = N-acetyl-beta-D-mannosaminyl-(1-&gt;4)-N-acetyl-alpha-D-glucosaminyl di-trans,octa-cis-undecaprenyl diphosphate + UDP + H(+). The protein operates within cell wall biogenesis; poly(ribitol phosphate) teichoic acid biosynthesis. Its function is as follows. Catalyzes the conversion of GlcNAc-PP-undecaprenol into ManNAc-GlcNAc-PP-undecaprenol, the first committed lipid intermediate in the de novo synthesis of teichoic acid. The sequence is that of N-acetylglucosaminyldiphosphoundecaprenol N-acetyl-beta-D-mannosaminyltransferase from Staphylococcus aureus (strain NCTC 8325 / PS 47).